We begin with the raw amino-acid sequence, 78 residues long: Probable [Fe-S]-dependent transcriptional repressor (78 aa).

Residues C56, C61, C64, and C70 each contribute to the iron-sulfur cluster site.

It belongs to the FeoC family.

In terms of biological role, may function as a transcriptional regulator that controls feoABC expression. The protein is Probable [Fe-S]-dependent transcriptional repressor of Escherichia coli O9:H4 (strain HS).